The primary structure comprises 182 residues: Fucoxanthin-chlorophyll a-c binding protein D, chloroplastic (182 aa).

A chloroplast-targeting transit peptide spans alanine 1–methionine 4. Helical transmembrane passes span isoleucine 46 to leucine 66, isoleucine 87 to methionine 107, and glycine 148 to proline 168.

It belongs to the fucoxanthin chlorophyll protein family. The LHC complex of chromophytic algae is composed of fucoxanthin, chlorophyll A and C bound non-covalently by fucoxanthin chlorophyll proteins (FCPs). The ratio of pigments in this LHC is; fucoxanthin: chlorophyll C: chlorophyll A; (0.6-1): (0.1-0.3): (1).

Its subcellular location is the plastid. The protein resides in the chloroplast thylakoid membrane. Functionally, the light-harvesting complex (LHC) functions as a light receptor, it captures and delivers excitation energy to photosystems with which it is closely associated. Energy is transferred from the carotenoid and chlorophyll C (or B) to chlorophyll A and the photosynthetic reaction centers where it is used to synthesize ATP and reducing power. The protein is Fucoxanthin-chlorophyll a-c binding protein D, chloroplastic (FCPD) of Macrocystis pyrifera (Giant kelp).